A 403-amino-acid chain; its full sequence is Dihydroorotase (403 aa).

Zn(2+)-binding residues include histidine 48 and histidine 50. Residues 50-52 (HLR) and asparagine 82 each bind substrate. Zn(2+) contacts are provided by glutamate 140, histidine 172, histidine 211, and aspartate 277. Aspartate 277 is a catalytic residue. Histidine 281 lines the substrate pocket.

The protein belongs to the metallo-dependent hydrolases superfamily. DHOase family. Class I DHOase subfamily. The cofactor is Zn(2+).

The enzyme catalyses (S)-dihydroorotate + H2O = N-carbamoyl-L-aspartate + H(+). It participates in pyrimidine metabolism; UMP biosynthesis via de novo pathway; (S)-dihydroorotate from bicarbonate: step 3/3. In terms of biological role, catalyzes the reversible cyclization of carbamoyl aspartate to dihydroorotate. The protein is Dihydroorotase of Archaeoglobus fulgidus (strain ATCC 49558 / DSM 4304 / JCM 9628 / NBRC 100126 / VC-16).